Here is a 195-residue protein sequence, read N- to C-terminus: Probable GTP-binding protein EngB (195 aa).

The region spanning 24 to 195 (DWPEIALAGR…EAWTAILKYL (172 aa)) is the EngB-type G domain. GTP contacts are provided by residues 32–39 (GRSNVGKS), 59–63 (GKTQL), 77–80 (DVPG), 144–147 (TKAD), and 176–178 (FSS). Residues Ser-39 and Thr-61 each contribute to the Mg(2+) site.

It belongs to the TRAFAC class TrmE-Era-EngA-EngB-Septin-like GTPase superfamily. EngB GTPase family. The cofactor is Mg(2+).

Necessary for normal cell division and for the maintenance of normal septation. This is Probable GTP-binding protein EngB from Lactococcus lactis subsp. cremoris (strain MG1363).